Reading from the N-terminus, the 77-residue chain is Protein IDA (77 aa).

The signal sequence occupies residues 1 to 26; the sequence is MAPCRTMMVLLCFVLFLAASSSCVAA. The interval 56-69 is RLK5-binding; sequence GVPIPPSAPSKRHN.

Interaction with RLK5. In terms of tissue distribution, expressed specifically in the floral abscission zone.

Its subcellular location is the secreted. It localises to the extracellular space. In terms of biological role, involved in an ethylene-independent separation step of floral abscission. Promotes abscission zone (AZ) cells rounding. May act with RLK5 and HSL2 as ligand-receptor pairs. The polypeptide is Protein IDA (Arabidopsis thaliana (Mouse-ear cress)).